The primary structure comprises 389 residues: viridiflorene synthase Agr2 (389 aa).

The N-terminal stretch at 1–15 (MVWDFVLSLFHSLLA) is a signal peptide. Residues D128, N263, S267, and E271 each coordinate Mg(2+). The DDXXD motif signature appears at 128-132 (DEVTD). (2E,6E)-farnesyl diphosphate contacts are provided by R360 and Y361.

This sequence belongs to the terpene synthase family. It depends on Mg(2+) as a cofactor.

The enzyme catalyses (2E,6E)-farnesyl diphosphate = viridiflorene + diphosphate. Functionally, terpene cyclase that catalyzes the cyclization of farnesyl diphosphate (FPP) to viridiflorene. In Cyclocybe aegerita (Black poplar mushroom), this protein is viridiflorene synthase Agr2.